Reading from the N-terminus, the 581-residue chain is Protein FAM83D (581 aa).

The interval 1-297 (MALRYDGLDE…LYAQSKPISS (297 aa)) is DUF1669. Residues 75 to 101 (PGEEGAAAGAEDSFGSSHDCSSGTYFP) are disordered. Residues 88–98 (FGSSHDCSSGT) are compositionally biased toward polar residues. Residue serine 296 is modified to Phosphoserine. The interval 338-581 (TPRKVELGGE…REIMLYPSYQ (244 aa)) is required for interaction with KIF22 and function in chromosome congression. Disordered regions lie at residues 366 to 401 (EDYF…MSDV) and 426 to 503 (QTVV…GPPK). The segment covering 369 to 382 (FSSRKDRLEGRRVT) has biased composition (basic and acidic residues). Over residues 426-438 (QTVVPTTSATTQT) the composition is skewed to low complexity. Serine 456 carries the phosphoserine modification. A compositionally biased stretch (low complexity) spans 462-488 (SVSRSSSLRSSSSLSSQGSVASSIGSQ). Position 507 is a phosphothreonine (threonine 507).

It belongs to the FAM83 family. Interacts with FBXW7; promotes FBXW7 degradation. May interact with RAF1. Interacts with KIF22; recruits KIF22 to mitotic spindle microtubules. Interacts (via C-terminus) with DYNLL1. Interacts with HMMR. Directly interacts (via DUF1669) with CSNK1A1 and CSNK1A1L. In terms of processing, phosphorylated during mitosis.

It is found in the cytoplasm. The protein resides in the cytoskeleton. The protein localises to the spindle. Its subcellular location is the spindle pole. Functionally, through the degradation of FBXW7, may act indirectly on the expression and downstream signaling of MTOR, JUN and MYC. May play also a role in cell proliferation through activation of the ERK1/ERK2 signaling cascade. May also be important for proper chromosome congression and alignment during mitosis through its interaction with KIF22. The sequence is that of Protein FAM83D from Bos taurus (Bovine).